The primary structure comprises 318 residues: L-lactate dehydrogenase 1 (318 aa).

Residues valine 17, aspartate 38, lysine 43, tyrosine 69, and 83 to 84 contribute to the NAD(+) site; that span reads GA. Residues glutamine 86, arginine 92, and 124–127 each bind substrate; that span reads NPVD. NAD(+) is bound by residues 122-124 and serine 147; that span reads ATN. 152-155 is a substrate binding site; sequence DTGR. Beta-D-fructose 1,6-bisphosphate-binding residues include arginine 157 and histidine 172. Residue histidine 179 is the Proton acceptor of the active site. Phosphotyrosine is present on tyrosine 224. Threonine 233 lines the substrate pocket.

Belongs to the LDH/MDH superfamily. LDH family. Homotetramer.

Its subcellular location is the cytoplasm. The enzyme catalyses (S)-lactate + NAD(+) = pyruvate + NADH + H(+). Its pathway is fermentation; pyruvate fermentation to lactate; (S)-lactate from pyruvate: step 1/1. Its activity is regulated as follows. Allosterically activated by fructose 1,6-bisphosphate (FBP). Catalyzes the conversion of lactate to pyruvate. This is L-lactate dehydrogenase 1 from Peribacillus psychrosaccharolyticus (Bacillus psychrosaccharolyticus).